The chain runs to 526 residues: Glutamate--cysteine ligase (526 aa).

Belongs to the glutamate--cysteine ligase type 1 family. Type 1 subfamily.

The catalysed reaction is L-cysteine + L-glutamate + ATP = gamma-L-glutamyl-L-cysteine + ADP + phosphate + H(+). It functions in the pathway sulfur metabolism; glutathione biosynthesis; glutathione from L-cysteine and L-glutamate: step 1/2. The polypeptide is Glutamate--cysteine ligase (Proteus mirabilis (strain HI4320)).